The primary structure comprises 436 residues: 3-ketoacyl-CoA thiolase (436 aa).

The Acyl-thioester intermediate role is filled by C99. Active-site proton acceptor residues include H392 and C422.

The protein belongs to the thiolase-like superfamily. Thiolase family. Heterotetramer of two alpha chains (FadJ) and two beta chains (FadI).

The protein resides in the cytoplasm. It carries out the reaction an acyl-CoA + acetyl-CoA = a 3-oxoacyl-CoA + CoA. It participates in lipid metabolism; fatty acid beta-oxidation. Its function is as follows. Catalyzes the final step of fatty acid oxidation in which acetyl-CoA is released and the CoA ester of a fatty acid two carbons shorter is formed. This Shewanella piezotolerans (strain WP3 / JCM 13877) protein is 3-ketoacyl-CoA thiolase.